The chain runs to 185 residues: Orotate phosphoribosyltransferase (185 aa).

5-phospho-alpha-D-ribose 1-diphosphate is bound by residues Arg102, Lys103, Lys106, His108, and 128–136 (DDVITTGGS). Thr132 and Arg160 together coordinate orotate.

This sequence belongs to the purine/pyrimidine phosphoribosyltransferase family. PyrE subfamily. Homodimer. Mg(2+) is required as a cofactor.

It carries out the reaction orotidine 5'-phosphate + diphosphate = orotate + 5-phospho-alpha-D-ribose 1-diphosphate. It participates in pyrimidine metabolism; UMP biosynthesis via de novo pathway; UMP from orotate: step 1/2. In terms of biological role, catalyzes the transfer of a ribosyl phosphate group from 5-phosphoribose 1-diphosphate to orotate, leading to the formation of orotidine monophosphate (OMP). The sequence is that of Orotate phosphoribosyltransferase from Leptospira biflexa serovar Patoc (strain Patoc 1 / Ames).